The following is a 102-amino-acid chain: Citrate lyase acyl carrier protein (102 aa).

S14 is subject to O-(phosphoribosyl dephospho-coenzyme A)serine.

The protein belongs to the CitD family. In terms of assembly, oligomer with a subunit composition of (alpha,beta,gamma)6.

Its subcellular location is the cytoplasm. In terms of biological role, covalent carrier of the coenzyme of citrate lyase. The protein is Citrate lyase acyl carrier protein of Streptococcus pyogenes serotype M2 (strain MGAS10270).